The chain runs to 213 residues: uncharacterized protein (213 aa).

This is an uncharacterized protein from Escherichia coli (strain K12).